A 483-amino-acid polypeptide reads, in one-letter code: Altronate oxidoreductase (483 aa).

18-29 is a binding site for NAD(+); that stretch reads IIQFGEGNFLRA.

It belongs to the mannitol dehydrogenase family. UxaB subfamily.

It carries out the reaction D-altronate + NAD(+) = keto-D-tagaturonate + NADH + H(+). Its pathway is carbohydrate metabolism; pentose and glucuronate interconversion. The sequence is that of Altronate oxidoreductase from Escherichia coli O7:K1 (strain IAI39 / ExPEC).